A 701-amino-acid chain; its full sequence is Elongation factor G (701 aa).

The tr-type G domain occupies 11-287; the sequence is TKVRNIGIMA…AVIDYLPSPL (277 aa). Residues 20-27, 84-88, and 138-141 each bind GTP; these read AHIDAGKT, DTPGH, and NKMD.

Belongs to the TRAFAC class translation factor GTPase superfamily. Classic translation factor GTPase family. EF-G/EF-2 subfamily.

The protein resides in the cytoplasm. In terms of biological role, catalyzes the GTP-dependent ribosomal translocation step during translation elongation. During this step, the ribosome changes from the pre-translocational (PRE) to the post-translocational (POST) state as the newly formed A-site-bound peptidyl-tRNA and P-site-bound deacylated tRNA move to the P and E sites, respectively. Catalyzes the coordinated movement of the two tRNA molecules, the mRNA and conformational changes in the ribosome. The sequence is that of Elongation factor G from Mycobacterium avium (strain 104).